The primary structure comprises 207 residues: Uridine kinase (207 aa).

13–20 (GASGSGKT) provides a ligand contact to ATP.

It belongs to the uridine kinase family.

It is found in the cytoplasm. It carries out the reaction uridine + ATP = UMP + ADP + H(+). The enzyme catalyses cytidine + ATP = CMP + ADP + H(+). Its pathway is pyrimidine metabolism; CTP biosynthesis via salvage pathway; CTP from cytidine: step 1/3. The protein operates within pyrimidine metabolism; UMP biosynthesis via salvage pathway; UMP from uridine: step 1/1. This is Uridine kinase from Ureaplasma parvum serovar 3 (strain ATCC 27815 / 27 / NCTC 11736).